A 518-amino-acid polypeptide reads, in one-letter code: Protein nucleotidyltransferase YdiU (518 aa).

Gly99, Gly101, Arg102, Lys122, Asp134, Gly135, Arg192, and Arg199 together coordinate ATP. The active-site Proton acceptor is Asp270. Mg(2+) contacts are provided by Asn271 and Asp280. Residue Asp280 coordinates ATP.

This sequence belongs to the SELO family. Mg(2+) serves as cofactor. Requires Mn(2+) as cofactor.

The catalysed reaction is L-seryl-[protein] + ATP = 3-O-(5'-adenylyl)-L-seryl-[protein] + diphosphate. It carries out the reaction L-threonyl-[protein] + ATP = 3-O-(5'-adenylyl)-L-threonyl-[protein] + diphosphate. The enzyme catalyses L-tyrosyl-[protein] + ATP = O-(5'-adenylyl)-L-tyrosyl-[protein] + diphosphate. It catalyses the reaction L-histidyl-[protein] + UTP = N(tele)-(5'-uridylyl)-L-histidyl-[protein] + diphosphate. The catalysed reaction is L-seryl-[protein] + UTP = O-(5'-uridylyl)-L-seryl-[protein] + diphosphate. It carries out the reaction L-tyrosyl-[protein] + UTP = O-(5'-uridylyl)-L-tyrosyl-[protein] + diphosphate. Functionally, nucleotidyltransferase involved in the post-translational modification of proteins. It can catalyze the addition of adenosine monophosphate (AMP) or uridine monophosphate (UMP) to a protein, resulting in modifications known as AMPylation and UMPylation. The polypeptide is Protein nucleotidyltransferase YdiU (Methylobacillus flagellatus (strain ATCC 51484 / DSM 6875 / VKM B-1610 / KT)).